The sequence spans 168 residues: Inorganic pyrophosphatase (168 aa).

The substrate site is built by K23, R37, and Y49. 3 residues coordinate Mg(2+): D59, D64, and D96. A substrate-binding site is contributed by Y133.

The protein belongs to the PPase family. In terms of assembly, homohexamer. Mg(2+) serves as cofactor.

The protein resides in the cytoplasm. The catalysed reaction is diphosphate + H2O = 2 phosphate + H(+). Functionally, catalyzes the hydrolysis of inorganic pyrophosphate (PPi) forming two phosphate ions. The polypeptide is Inorganic pyrophosphatase (Methanosarcina acetivorans (strain ATCC 35395 / DSM 2834 / JCM 12185 / C2A)).